The primary structure comprises 208 residues: Segregation and condensation protein B (208 aa).

It belongs to the ScpB family. As to quaternary structure, homodimer. Homodimerization may be required to stabilize the binding of ScpA to the Smc head domains. Component of a cohesin-like complex composed of ScpA, ScpB and the Smc homodimer, in which ScpA and ScpB bind to the head domain of Smc. The presence of the three proteins is required for the association of the complex with DNA.

It is found in the cytoplasm. Participates in chromosomal partition during cell division. May act via the formation of a condensin-like complex containing Smc and ScpA that pull DNA away from mid-cell into both cell halves. This is Segregation and condensation protein B from Mycoplasma pneumoniae (strain ATCC 29342 / M129 / Subtype 1) (Mycoplasmoides pneumoniae).